The chain runs to 330 residues: Cathepsin S (330 aa).

A signal peptide spans 1–17 (MKQLVCVLFVCSSAVTQ). Residues 18 to 114 (LHKDPTLDHH…ITYKSNPNQM (97 aa)) constitute a propeptide, activation peptide. Residue Asn104 is glycosylated (N-linked (GlcNAc...) asparagine). 4 disulfides stabilise this stretch: Cys126–Cys223, Cys136–Cys179, Cys170–Cys212, and Cys271–Cys319. Residue Cys139 is part of the active site. Residues His277 and Asn297 contribute to the active site.

Belongs to the peptidase C1 family.

Its subcellular location is the lysosome. It localises to the secreted. It is found in the cytoplasmic vesicle. The protein localises to the phagosome. It catalyses the reaction Similar to cathepsin L, but with much less activity on Z-Phe-Arg-|-NHMec, and more activity on the Z-Val-Val-Arg-|-Xaa compound.. Functionally, thiol protease. Key protease responsible for the removal of the invariant chain from MHC class II molecules and MHC class II antigen presentation. The bond-specificity of this proteinase is in part similar to the specificities of cathepsin L. This Saimiri boliviensis boliviensis (Bolivian squirrel monkey) protein is Cathepsin S (CTSS).